A 551-amino-acid polypeptide reads, in one-letter code: Urocanate hydratase (551 aa).

Residues 48 to 49 (GG), Gln-126, 172 to 174 (GMG), Glu-192, Arg-197, 238 to 239 (NA), 259 to 263 (QTSAH), 269 to 270 (YI), and Tyr-318 contribute to the NAD(+) site. The active site involves Cys-406. Gly-488 contacts NAD(+).

This sequence belongs to the urocanase family. NAD(+) serves as cofactor.

The protein localises to the cytoplasm. The enzyme catalyses 4-imidazolone-5-propanoate = trans-urocanate + H2O. The protein operates within amino-acid degradation; L-histidine degradation into L-glutamate; N-formimidoyl-L-glutamate from L-histidine: step 2/3. Functionally, catalyzes the conversion of urocanate to 4-imidazolone-5-propionate. The polypeptide is Urocanate hydratase (Geobacillus kaustophilus (strain HTA426)).